We begin with the raw amino-acid sequence, 628 residues long: Rac GTPase-activating protein 1 (628 aa).

At M1 the chain carries N-acetylmethionine. Residues Q33–C110 are a coiled coil. The segment at I107–R286 is interaction with SLC26A8. S150 is modified (phosphoserine; by PLK1). Phosphoserine is present on S155. Residue S158 is modified to Phosphoserine; by PLK1. T162 is subject to Phosphothreonine. Phosphoserine; by PLK1 occurs at positions 165 and 171. The disordered stretch occupies residues K179–K201. S204, S207, and S215 each carry phosphoserine. Residues S242 to G284 form a disordered region. A Glycyl lysine isopeptide (Lys-Gly) (interchain with G-Cter in SUMO2) cross-link involves residue K249. Residue S258 is modified to Phosphoserine. The span at D274–G283 shows a compositional bias: polar residues. The segment at L287–C336 adopts a Phorbol-ester/DAG-type zinc-finger fold. Residue T343 is modified to Phosphothreonine. The 191-residue stretch at G350–W540 folds into the Rho-GAP domain. S388 carries the post-translational modification Phosphoserine; by AURKB. A Glycyl lysine isopeptide (Lys-Gly) (interchain with G-Cter in SUMO2) cross-link involves residue K405. S411 carries the post-translational modification Phosphoserine; by AURKB. Phosphothreonine is present on residues T564, T577, T585, and T602.

In terms of assembly, heterotetramer of two molecules each of RACGAP1 and KIF23. Found in the centralspindlin complex. Associates with alpha-, beta- and gamma-tubulin and microtubules. Interacts via its Rho-GAP domain with RND2. Associates with AURKB during M phase. Interacts via its Rho-GAP domain and basic region with PRC1. The interaction with PRC1 inhibits its GAP activity towards CDC42 in vitro, which may be required for maintaining normal spindle morphology. Interacts with SLC26A8 via its N-terminus. Interacts with ECT2; the interaction is direct, occurs at anaphase and during cytokinesis in a microtubule-dependent manner, is enhanced by phosphorylation by PLK1 and phosphorylation at Ser-165 plays a major role in mediating binding. Interacts with RAB11FIP3; the interaction occurs at late telophase. Interacts with KIF23; the interaction is direct. Post-translationally, phosphorylated at multiple sites in the midbody during cytokinesis. Phosphorylation by AURKB on Ser-388 at the midbody is, at least in part, responsible for exerting its latent GAP activity towards RhoA. Phosphorylation on multiple serine residues by PLK1 enhances its association with ECT2 and is critical for cleavage furrow formation. Phosphorylation on Ser-165 plays a major role in mediating interaction with ECT2. Phosphorylation on Ser-158 does not appear to contribute to binding to ECT2. As to expression, highly expressed in testis, thymus and spleen and weakly expressed in brain, heart, skeletal muscle and kidney. In testis, expression is restricted to germ cells with the highest levels of expression found in spermatocytes. Not detected in adult liver. Also expressed in fetal liver and in several hematopoietic cell lines.

It is found in the nucleus. The protein localises to the cytoplasm. Its subcellular location is the cytoskeleton. The protein resides in the spindle. It localises to the cytoplasmic vesicle. It is found in the secretory vesicle. The protein localises to the acrosome. Its subcellular location is the cleavage furrow. The protein resides in the midbody. It localises to the midbody ring. It is found in the cell membrane. Its function is as follows. Component of the centralspindlin complex that serves as a microtubule-dependent and Rho-mediated signaling required for the myosin contractile ring formation during the cell cycle cytokinesis. Required for proper attachment of the midbody to the cell membrane during cytokinesis. Sequentially binds to ECT2 and RAB11FIP3 which regulates cleavage furrow ingression and abscission during cytokinesis. Plays key roles in controlling cell growth and differentiation of hematopoietic cells through mechanisms other than regulating Rac GTPase activity. Has a critical role in erythropoiesis. Also involved in the regulation of growth-related processes in adipocytes and myoblasts. May be involved in regulating spermatogenesis and in the RACGAP1 pathway in neuronal proliferation. Shows strong GAP (GTPase activation) activity towards CDC42 and RAC1 and less towards RHOA. Essential for the early stages of embryogenesis. May play a role in regulating cortical activity through RHOA during cytokinesis. May participate in the regulation of sulfate transport in male germ cells. The sequence is that of Rac GTPase-activating protein 1 from Mus musculus (Mouse).